A 1133-amino-acid chain; its full sequence is Exportin-4 (1133 aa).

Belongs to the exportin family. As to quaternary structure, interacts with Ran and cargo proteins in a GTP-dependent manner.

The protein localises to the cytoplasm. It is found in the nucleus. Functionally, mediates the nuclear export of proteins (cargos). In the nucleus binds cooperatively to its cargo and to the GTPase Ran in its active GTP-bound form. Docking of this trimeric complex to the nuclear pore complex (NPC) is mediated through binding to nucleoporins. Upon transit of a nuclear export complex into the cytoplasm, disassembling of the complex and hydrolysis of Ran-GTP to Ran-GDP cause release of the cargo from the export receptor. Xpo4 then return to the nuclear compartment and mediate another round of transport. The directionality of nuclear export is thought to be conferred by an asymmetric distribution of the GTP- and GDP-bound forms of Ran between the cytoplasm and nucleus. The sequence is that of Exportin-4 (xpo4) from Dictyostelium discoideum (Social amoeba).